An 89-amino-acid chain; its full sequence is Large ribosomal subunit protein bL27 (89 aa).

The segment at 1-26 (MATKKAGGSSKNGRDSAGRRLGLKKS) is disordered.

Belongs to the bacterial ribosomal protein bL27 family.

The protein is Large ribosomal subunit protein bL27 of Orientia tsutsugamushi (strain Ikeda) (Rickettsia tsutsugamushi).